The sequence spans 379 residues: MTAIRYEFIKTCKQTGARLGRVHTPHGSFDTPTFMPVGTLATVKTMSPEELKAMDSGIILSNTYHLWLRPGHEIIREAGGLHKFMNWDRAILTDSGGFQVFSLSDFRRIEEEGVHFRNHLNGDKLFLSPEKAMEIQNALGSDIMMAFDECPPFPATFEYMKKSVERTSRWAERCLKAHERPQDQGLFGIVQGGEFEELRRQSAKDLVSMDFPGYAVGGLSVGEPKDIMNRVLEFTTPLLPDNKPRYLMGVGSPDSLIDGAIRGIDMFDCVLPTRIARNGTCMTSEGRLVVKNAKFARDFGPLDPNCDCYTCKNYSRAYIRHLMKCDETFGIRLTSYHNLHFLLNLMEQVRQAIREDRLGDFREEFFEQYGFNKPNAKNF.

Catalysis depends on D94, which acts as the Proton acceptor. Substrate-binding positions include 94–98 (DSGGF), D148, Q191, and G218. The RNA binding stretch occupies residues 249 to 255 (GVGSPDS). The active-site Nucleophile is D268. The tract at residues 273–277 (TRIAR) is RNA binding; important for wobble base 34 recognition. C306, C308, C311, and H337 together coordinate Zn(2+).

This sequence belongs to the queuine tRNA-ribosyltransferase family. In terms of assembly, homodimer. Within each dimer, one monomer is responsible for RNA recognition and catalysis, while the other monomer binds to the replacement base PreQ1. It depends on Zn(2+) as a cofactor.

It catalyses the reaction 7-aminomethyl-7-carbaguanine + guanosine(34) in tRNA = 7-aminomethyl-7-carbaguanosine(34) in tRNA + guanine. The protein operates within tRNA modification; tRNA-queuosine biosynthesis. Catalyzes the base-exchange of a guanine (G) residue with the queuine precursor 7-aminomethyl-7-deazaguanine (PreQ1) at position 34 (anticodon wobble position) in tRNAs with GU(N) anticodons (tRNA-Asp, -Asn, -His and -Tyr). Catalysis occurs through a double-displacement mechanism. The nucleophile active site attacks the C1' of nucleotide 34 to detach the guanine base from the RNA, forming a covalent enzyme-RNA intermediate. The proton acceptor active site deprotonates the incoming PreQ1, allowing a nucleophilic attack on the C1' of the ribose to form the product. After dissociation, two additional enzymatic reactions on the tRNA convert PreQ1 to queuine (Q), resulting in the hypermodified nucleoside queuosine (7-(((4,5-cis-dihydroxy-2-cyclopenten-1-yl)amino)methyl)-7-deazaguanosine). The sequence is that of Queuine tRNA-ribosyltransferase from Bacillus anthracis (strain CDC 684 / NRRL 3495).